The primary structure comprises 481 residues: G-protein coupled receptor 37-like 1 (481 aa).

A signal peptide spans 1–24; that stretch reads MRWLWPLAVSLAVVLAVGPSEVSG. The Extracellular portion of the chain corresponds to 25 to 134; the sequence is AATLSLGGHR…ESSYSAYAVM (110 aa). Disordered regions lie at residues 30-55 and 76-107; these read LGGHRAKVQEQQSRPRRGTKDEGPKE and LQPTKPLVATSPNPDKDGATSESGQELRTNLT. The segment covering 95–107 has biased composition (polar residues); the sequence is TSESGQELRTNLT. An N-linked (GlcNAc...) asparagine glycan is attached at asparagine 105. Residues 135 to 155 form a helical membrane-spanning segment; it reads LLALVVFAVGIVGNLSVMCIV. The Cytoplasmic segment spans residues 156-167; that stretch reads WHSYYLKSAWNS. Residues 168–188 traverse the membrane as a helical segment; that stretch reads ILASLALWDFLVLFFCLPIVI. The Extracellular segment spans residues 189-205; sequence FNEITKQRLLGDVSCRA. Cysteines 203 and 286 form a disulfide. A helical membrane pass occupies residues 206–226; the sequence is VPFMEVSSLGVTTFSLCALGI. Over 227-251 the chain is Cytoplasmic; sequence DRFHVATSTLPKVRPIERCQSILAK. The helical transmembrane segment at 252-272 threads the bilayer; it reads LAVIWVGSMMLAVPELLLWQL. Residues 273-310 are Extracellular-facing; sequence AQEPTPTMGTVDSCIMKPSADLPESLYSLVMTYQNARM. Residues 311–331 form a helical membrane-spanning segment; sequence WWYFGCYFCLPILFTVTCQLV. The Cytoplasmic portion of the chain corresponds to 332–360; the sequence is TWRVRGPPGRKPECRAGRHEQCESQLNST. Residues 361–381 form a helical membrane-spanning segment; sequence VVGLTVVYAFCTLPENICNIV. The Extracellular segment spans residues 382 to 398; it reads VAYLSTELTRQTLDLLG. Residues 399 to 419 traverse the membrane as a helical segment; it reads LINQFSTFFKGAITPVLLLCI. Residues 420–481 lie on the Cytoplasmic side of the membrane; sequence CRPLGQAFLD…PPLLPLGTPC (62 aa). A Phosphoserine modification is found at serine 471. Threonine 479 bears the Phosphothreonine mark.

It belongs to the G-protein coupled receptor 1 family. Interacts with the PTCH1 receptor. In terms of processing, undergoes metalloprotease-mediated cleavage which reduces its constitutive activity. Ubiquitinated. In terms of tissue distribution, highly expressed in brain.

Its subcellular location is the cell membrane. The protein localises to the cell projection. It is found in the cilium membrane. Functionally, G-protein coupled receptor. Has been shown to bind the neuroprotective and glioprotective factor prosaposin (PSAP), leading to endocytosis followed by an ERK phosphorylation cascade. However, other studies have shown that prosaposin does not increase activity. It has been suggested that GPR37L1 is a constitutively active receptor which signals through the guanine nucleotide-binding protein G(s) subunit alpha. Participates in the regulation of postnatal cerebellar development by modulating the Shh pathway. Regulates baseline blood pressure in females and protects against cardiovascular stress in males. Mediates inhibition of astrocyte glutamate transporters and reduction in neuronal N-methyl-D-aspartate receptor activity. This chain is G-protein coupled receptor 37-like 1 (Gpr37l1), found in Rattus norvegicus (Rat).